We begin with the raw amino-acid sequence, 522 residues long: MTKLTDEVKKRRTFAIISHPDAGKTTITEQMLLFGGVIRSAGTVKARKSGHYATSDWMAIEKKRGISVTSSVMQFEYQGKRINILDTPGHQDFSEDTYRTLMAVDAAVMVIDSAKGIEPQTKKLFKVVKKRGIPIFTFMNKLDRDGREPLDLIAELEDLLGIEGVAMNWPIGMGKQLKGLYDIANNRVELYRKDEDDRYLPLDENGKLSEDEALAQDSLYQSTLDDIDLLKEAGNTFDKDKILRGDQTPVFFGSALTNFGVETFLDSFVNLAPAPQEHVVNEDEKLAADDPEFSGFVFKIQANMNPNHRDRIAFVRIGSGEFKKGIDVTLARTGKPVRLNNATEFMSSERVQVSDAVAGDIVGLYDTGNFQIGDSIYAGKKKIVYPELPQFTPEIFMRVTAKNVMKQKSFHKGMNQLVQEGAIQLYRGYSTDDYILGAVGQLQFEVFSFRMKNEYNSEVELHTLGNRVARWINPDQLDPKMSSSRNLLVKDRDGEPLFLFENAFAERWFKDKYPDVELTSRL.

The 268-residue stretch at 9-276 (KKRRTFAIIS…SFVNLAPAPQ (268 aa)) folds into the tr-type G domain. GTP-binding positions include 18 to 25 (SHPDAGKT), 86 to 90 (DTPGH), and 140 to 143 (NKLD).

This sequence belongs to the TRAFAC class translation factor GTPase superfamily. Classic translation factor GTPase family. PrfC subfamily.

It is found in the cytoplasm. Its function is as follows. Increases the formation of ribosomal termination complexes and stimulates activities of RF-1 and RF-2. It binds guanine nucleotides and has strong preference for UGA stop codons. It may interact directly with the ribosome. The stimulation of RF-1 and RF-2 is significantly reduced by GTP and GDP, but not by GMP. The chain is Peptide chain release factor 3 from Lactobacillus johnsonii (strain CNCM I-12250 / La1 / NCC 533).